The following is a 186-amino-acid chain: Ribosome-recycling factor (186 aa).

This sequence belongs to the RRF family.

It localises to the cytoplasm. Its function is as follows. Responsible for the release of ribosomes from messenger RNA at the termination of protein biosynthesis. May increase the efficiency of translation by recycling ribosomes from one round of translation to another. This chain is Ribosome-recycling factor, found in Limosilactobacillus reuteri (Lactobacillus reuteri).